A 352-amino-acid polypeptide reads, in one-letter code: Mitochondrial ubiquitin ligase activator of NFKB 1 (352 aa).

The Cytoplasmic portion of the chain corresponds to 1–8 (MESGGRPS). The chain crosses the membrane as a helical span at residues 9 to 29 (LCQFILLGTTSVVTAALYSVY). At 30-238 (RQKARVSQEL…LLQRQESSVR (209 aa)) the chain is on the mitochondrial intermembrane side. A Glycyl lysine isopeptide (Lys-Gly) (interchain with G-Cter in ubiquitin) cross-link involves residue Lys52. A helical transmembrane segment spans residues 239-259 (LWKVLALVFGFATCATLFFIL). Topologically, residues 260–352 (RKQYLQRQER…ITRVIPLYNS (93 aa)) are cytoplasmic. Residues Lys273 and Lys299 each participate in a glycyl lysine isopeptide (Lys-Gly) (interchain with G-Cter in ubiquitin) cross-link. Residues 302 to 340 (CVVCLSSFKSCVFLECGHVCSCTECYRALPEPKKCPICR) form an RING-type zinc finger.

Homooligomer. Interacts with MAP3K7/TAK1. Interacts with UBC9. Interacts with and sumoylates DNM1L. Interacts with MAVS. Interacts with TP53 (via N-terminus); the interaction leads to ubiquitination and proteasomal degradation of TP53. In terms of processing, ubiquitinated by PRKN during mitophagy, leading to its degradation and enhancement of mitophagy. Deubiquitinated by USP30. In terms of tissue distribution, widely expressed with highest levels in the heart, skeletal muscle, placenta, kidney and liver. Barely detectable in colon and thymus.

It localises to the mitochondrion outer membrane. Its subcellular location is the peroxisome. It carries out the reaction S-ubiquitinyl-[E2 ubiquitin-conjugating enzyme]-L-cysteine + [acceptor protein]-L-lysine = [E2 ubiquitin-conjugating enzyme]-L-cysteine + N(6)-ubiquitinyl-[acceptor protein]-L-lysine.. The protein operates within protein modification; protein ubiquitination. It functions in the pathway protein modification; protein sumoylation. In terms of biological role, exhibits weak E3 ubiquitin-protein ligase activity. E3 ubiquitin ligases accept ubiquitin from an E2 ubiquitin-conjugating enzyme in the form of a thioester and then directly transfer the ubiquitin to targeted substrates. Can ubiquitinate AKT1 preferentially at 'Lys-284' involving 'Lys-48'-linked polyubiquitination and seems to be involved in regulation of Akt signaling by targeting phosphorylated Akt to proteasomal degradation. Mediates polyubiquitination of cytoplasmic TP53 at 'Lys-24' which targets TP53 for proteasomal degradation, thus reducing TP53 levels in the cytoplasm and mitochondrion. Proposed to preferentially act as a SUMO E3 ligase at physiological concentrations. Plays a role in the control of mitochondrial morphology by promoting mitochondrial fragmentation, and influences mitochondrial localization. Likely to promote mitochondrial fission through negatively regulating the mitochondrial fusion proteins MFN1 and MFN2, acting in a pathway that is parallel to the PRKN/PINK1 regulatory pathway. May also be involved in the sumoylation of the membrane fission protein DNM1L. Inhibits cell growth. When overexpressed, activates JNK through MAP3K7/TAK1 and induces caspase-dependent apoptosis. Involved in the modulation of innate immune defense against viruses by inhibiting RIGI-dependent antiviral response. Can mediate RIGI sumoylation and disrupt its polyubiquitination. In Homo sapiens (Human), this protein is Mitochondrial ubiquitin ligase activator of NFKB 1 (MUL1).